Here is a 244-residue protein sequence, read N- to C-terminus: MLIIPAIDLKDGKCVRLKQGRMDDSTVFSDDPVSMAAQWVDAGARRLHLVDLNGAFAGKPVNGEIVSAIAKAYPDLPIQIGGGIRELDIIEQYLDAGVKYVIIGTKAVKEPAFVEEACRAFPGAVIVGIDAKDGMVATEGWAEVSSVSAVDLAKQFRDAGVSSIVYTDIARDGMMQGVNVEATAALARESGLPVIASGGVTNMDDIRRLATVADSGVIGAITGRAIYEGALDLREAQTYCDSIA.

D8 acts as the Proton acceptor in catalysis. The active-site Proton donor is the D130.

It belongs to the HisA/HisF family.

Its subcellular location is the cytoplasm. The catalysed reaction is 1-(5-phospho-beta-D-ribosyl)-5-[(5-phospho-beta-D-ribosylamino)methylideneamino]imidazole-4-carboxamide = 5-[(5-phospho-1-deoxy-D-ribulos-1-ylimino)methylamino]-1-(5-phospho-beta-D-ribosyl)imidazole-4-carboxamide. The protein operates within amino-acid biosynthesis; L-histidine biosynthesis; L-histidine from 5-phospho-alpha-D-ribose 1-diphosphate: step 4/9. The polypeptide is 1-(5-phosphoribosyl)-5-[(5-phosphoribosylamino)methylideneamino] imidazole-4-carboxamide isomerase (Hahella chejuensis (strain KCTC 2396)).